Here is a 455-residue protein sequence, read N- to C-terminus: ATP-dependent protease ATPase subunit HslU (455 aa).

Residues isoleucine 19 and glycine 61–glutamate 66 contribute to the ATP site. The disordered stretch occupies residues glutamate 144 to lysine 163. ATP-binding residues include aspartate 268, glutamate 333, and arginine 405.

The protein belongs to the ClpX chaperone family. HslU subfamily. A double ring-shaped homohexamer of HslV is capped on each side by a ring-shaped HslU homohexamer. The assembly of the HslU/HslV complex is dependent on binding of ATP.

Its subcellular location is the cytoplasm. In terms of biological role, ATPase subunit of a proteasome-like degradation complex; this subunit has chaperone activity. The binding of ATP and its subsequent hydrolysis by HslU are essential for unfolding of protein substrates subsequently hydrolyzed by HslV. HslU recognizes the N-terminal part of its protein substrates and unfolds these before they are guided to HslV for hydrolysis. This Francisella tularensis subsp. novicida (strain U112) protein is ATP-dependent protease ATPase subunit HslU.